Here is a 529-residue protein sequence, read N- to C-terminus: Delayed-rectifier potassium channel regulatory subunit KCNS1 (529 aa).

The Cytoplasmic segment spans residues 1 to 217 (MLMLLVRGTH…LTMENPGYSL (217 aa)). The helical transmembrane segment at 218–239 (PSKLFSCVSISVVLASIAAMCI) threads the bilayer. The Extracellular portion of the chain corresponds to 240–270 (HSLPEYQAREAAAAVAAVAAGRSPEGVRDDP). The helical transmembrane segment at 271–293 (VLRRLEYFCIAWFSFEVSSRLLL) threads the bilayer. Residues 294–304 (APSTRNFFCHP) are Cytoplasmic-facing. The chain crosses the membrane as a helical span at residues 305–322 (LNLIDIVSVLPFYLTLLA). Residues 323–340 (GVALGDQGGTGGKELGHL) are Extracellular-facing. Residues 341–361 (GKVVQVFRLMRIFRVLKLARH) traverse the membrane as a helical; Voltage-sensor segment. The Cytoplasmic segment spans residues 362–376 (STGLRSLGATLKHSY). A helical transmembrane segment spans residues 377–398 (REVGILLLYLAVGVSVFSGVAY). Residues 399–411 (TAEKEEDVGFNTI) are Extracellular-facing. An intramembrane region (helical) is located at residues 412 to 423 (PACWWWGTVSMT). Residues 424-429 (TVGYGD) carry the Selectivity filter motif. The stretch at 424–431 (TVGYGDVV) is an intramembrane region. The Extracellular segment spans residues 432 to 438 (PVTVAGK). Residues 439–467 (LAASGCILGGILVVALPITIIFNKFSHFY) traverse the membrane as a helical segment. Over 468-529 (RRQKALEAAV…PSEPPHPQMY (62 aa)) the chain is Cytoplasmic. The segment at 494–529 (GVSEASLETSRETSQEGRSADLETQAPSEPPHPQMY) is disordered. The span at 502–514 (TSRETSQEGRSAD) shows a compositional bias: basic and acidic residues.

This sequence belongs to the potassium channel family. S (TC 1.A.1.2) subfamily. Kv9.1/KCNS1 sub-subfamily. As to quaternary structure, heterotetramer with KCNB1. Heterotetramer with KCNB2. Does not form homomultimers.

The protein localises to the cell membrane. In terms of biological role, potassium channel regulatory subunit that modulate the delayed rectifier voltage-gated potassium channel activity of KCNB1 and KCNB2 by altering their kinetics, expression levels, and shifting the half-inactivation potential to more polarized values. While it does not form functional channels on its own, it can form functional heterotetrameric channels with KCNB1 and KCNB2. Each regulatory subunit has unique regulatory properties that can lead to extensive inhibition, significant changes in kinetics, and/or substantial shifts in the voltage dependencies of the inactivation process. The sequence is that of Delayed-rectifier potassium channel regulatory subunit KCNS1 from Macaca mulatta (Rhesus macaque).